A 221-amino-acid polypeptide reads, in one-letter code: DNA repair and recombination protein RadB (221 aa).

The protein belongs to the eukaryotic RecA-like protein family. RadB subfamily.

Functionally, involved in DNA repair and in homologous recombination. May regulate the cleavage reactions of the branch-structured DNA. Has a very weak ATPase activity that is not stimulated by DNA. Binds DNA but does not promote DNA strands exchange. This chain is DNA repair and recombination protein RadB, found in Thermococcus gammatolerans (strain DSM 15229 / JCM 11827 / EJ3).